A 118-amino-acid chain; its full sequence is Basic phospholipase A2 CM-II (118 aa).

Cystine bridges form between cysteine 11-cysteine 70, cysteine 26-cysteine 117, cysteine 28-cysteine 44, cysteine 43-cysteine 98, cysteine 50-cysteine 91, cysteine 59-cysteine 84, and cysteine 77-cysteine 89. The Ca(2+) site is built by tyrosine 27, glycine 29, and glycine 31. The active site involves histidine 47. Aspartate 48 is a binding site for Ca(2+). Residue aspartate 92 is part of the active site.

The protein belongs to the phospholipase A2 family. Group I subfamily. D49 sub-subfamily. Ca(2+) is required as a cofactor. Expressed by the venom gland.

The protein localises to the secreted. It carries out the reaction a 1,2-diacyl-sn-glycero-3-phosphocholine + H2O = a 1-acyl-sn-glycero-3-phosphocholine + a fatty acid + H(+). Functionally, snake venom phospholipase A2 (PLA2) that causes myonecrosis when injected intramuscularly, causes neuromuscular blockade with a gradual contracture and a decreased sensitivity to ACh and KCl (in the chick biventer cervicis nerve-muscle preparation), abolishes twitches evoked by indirect stimulation earlier than those by direct stimulation (in the mouse phrenic nerve-diaphragm preparation), shows indirect hemolytic activity, and shows weak anticoagulant activity. PLA2 catalyzes the calcium-dependent hydrolysis of the 2-acyl groups in 3-sn-phosphoglycerides. In Naja mossambica (Mozambique spitting cobra), this protein is Basic phospholipase A2 CM-II.